Reading from the N-terminus, the 358-residue chain is MLAMASVEELWAKLDGAADCKSLLKNNLTKERYEALKDKKTKFGGTLADCIRSGCLNLDSGVGIYACDPDAYTVFADVLDAVIKEYHKVPELKHPEPEMGDLDKLNFGDLDPSGEYIVSTRVRVGRSHDSYGFPPVLTKQERLKMEEDTKAAFEKFSGELAGKYFPLEGMSKEDQKQMTEDHFLFKDDDRFLRDAGGYNDWCSGRGIFFNTAKNFLVWVNEEDHLRLISMQKGGDLAAVYKRLVVAINTMTASGLSFAKRDGLGYLTFCPSNLGTALRASVHMKIPNLAASPEFKSFCDNLNIQARGIHGEHTESVGGVYDLSNKRRLGLTEYQAVEEMRVGVEACLAKEKELAAAKK.

One can recognise a Phosphagen kinase N-terminal domain in the interval 6-88; it reads SVEELWAKLD…LDAVIKEYHK (83 aa). A substrate-binding site is contributed by 61 to 65; the sequence is GVGIY. The 238-residue stretch at 116–353 folds into the Phosphagen kinase C-terminal domain; it reads YIVSTRVRVG…EACLAKEKEL (238 aa). Residues 119 to 123 and H182 contribute to the ATP site; that span reads STRVR. Position 222 (E222) interacts with substrate. Position 226 (R226) interacts with ATP. Substrate is bound at residue C269. ATP is bound by residues 278–282 and 306–311; these read RASVH and RGIHGE. E311 provides a ligand contact to substrate.

Belongs to the ATP:guanido phosphotransferase family. As to quaternary structure, monomer.

It carries out the reaction L-arginine + ATP = N(omega)-phospho-L-arginine + ADP + H(+). This is Arginine kinase from Haliotis madaka (Giant abalone).